The following is a 169-amino-acid chain: Large ribosomal subunit protein uL10 (169 aa).

Belongs to the universal ribosomal protein uL10 family. In terms of assembly, part of the ribosomal stalk of the 50S ribosomal subunit. The N-terminus interacts with L11 and the large rRNA to form the base of the stalk. The C-terminus forms an elongated spine to which L12 dimers bind in a sequential fashion forming a multimeric L10(L12)X complex.

Its function is as follows. Forms part of the ribosomal stalk, playing a central role in the interaction of the ribosome with GTP-bound translation factors. The polypeptide is Large ribosomal subunit protein uL10 (Rickettsia typhi (strain ATCC VR-144 / Wilmington)).